Here is a 323-residue protein sequence, read N- to C-terminus: Alpha-tubulin N-acetyltransferase 1 (323 aa).

Positions 1-190 (MEFPFDVDAL…NNFVIFEGFF (190 aa)) constitute an N-acetyltransferase domain. N6-acetyllysine; by autocatalysis is present on lysine 56. 124 to 137 (FYIHESVQRHGHGR) provides a ligand contact to acetyl-CoA. The residue at position 146 (lysine 146) is an N6-acetyllysine; by autocatalysis. 160–169 (SQKLLKFLNK) contacts acetyl-CoA. A disordered region spans residues 196–239 (PPAPSLRATRHSRAAAVDPTPTAPARKLPPKRAEGDIKPYSSSD). A compositionally biased stretch (low complexity) spans 209-220 (AAAVDPTPTAPA). The span at 226 to 239 (KRAEGDIKPYSSSD) shows a compositional bias: basic and acidic residues. Lysine 233 and lysine 244 each carry N6-acetyllysine; by autocatalysis. Residues 252–287 (PLNRAPRRATPPAHPPPRSSSLGNSPERGPLRPFVP) are disordered. Phosphoserine occurs at positions 272 and 276. Arginine 305 is modified (asymmetric dimethylarginine). A Phosphoserine modification is found at serine 315. Omega-N-methylarginine is present on arginine 323.

It belongs to the acetyltransferase ATAT1 family. Component of the BBSome complex. Interacts with AP2 alpha-adaptins, including AP2A2, but not with AP1 gamma-adaptin (AP1G1/AP1G2); this interaction is required for efficient alpha-tubulin acetylation, hence clathrin-coated pits are sites of microtubule acetylation. In terms of processing, autoacetylation strongly increases tubulin acetylation.

The protein localises to the cytoplasm. The protein resides in the membrane. It is found in the clathrin-coated pit. It localises to the cell junction. Its subcellular location is the focal adhesion. The protein localises to the cell projection. The protein resides in the axon. It is found in the cytoskeleton. It localises to the spindle. The enzyme catalyses L-lysyl-[alpha-tubulin] + acetyl-CoA = N(6)-acetyl-L-lysyl-[alpha-tubulin] + CoA + H(+). Functionally, specifically acetylates 'Lys-40' in alpha-tubulin on the lumenal side of microtubules. Promotes microtubule destabilization and accelerates microtubule dynamics; this activity may be independent of acetylation activity. Acetylates alpha-tubulin with a slow enzymatic rate, due to a catalytic site that is not optimized for acetyl transfer. Enters the microtubule through each end and diffuses quickly throughout the lumen of microtubules. Acetylates only long/old microtubules because of its slow acetylation rate since it does not have time to act on dynamically unstable microtubules before the enzyme is released. Required for normal sperm flagellar function. Promotes directional cell locomotion and chemotaxis, through AP2A2-dependent acetylation of alpha-tubulin at clathrin-coated pits that are concentrated at the leading edge of migrating cells. May facilitate primary cilium assembly. This Macaca mulatta (Rhesus macaque) protein is Alpha-tubulin N-acetyltransferase 1.